A 350-amino-acid chain; its full sequence is Ion-translocating oxidoreductase complex subunit D (350 aa).

A run of 3 helical transmembrane segments spans residues 20–39 (IMML…WYFF), 89–109 (IPPL…VIIA), and 123–143 (PAMI…TNWL). Thr187 is modified (FMN phosphoryl threonine). Transmembrane regions (helical) follow at residues 215-235 (LAGL…LFLL), 244-264 (IPVS…LIAP), 267-287 (FLSP…FFIL), 301-321 (LVFG…GGYP), and 322-342 (DGVA…DYYT).

This sequence belongs to the NqrB/RnfD family. In terms of assembly, the complex is composed of six subunits: RnfA, RnfB, RnfC, RnfD, RnfE and RnfG. The cofactor is FMN.

It localises to the cell inner membrane. In terms of biological role, part of a membrane-bound complex that couples electron transfer with translocation of ions across the membrane. The protein is Ion-translocating oxidoreductase complex subunit D of Cronobacter sakazakii (strain ATCC BAA-894) (Enterobacter sakazakii).